A 582-amino-acid polypeptide reads, in one-letter code: Fructose-1,6-bisphosphatase class 3 (582 aa).

It belongs to the FBPase class 3 family. Requires Mn(2+) as cofactor.

The enzyme catalyses beta-D-fructose 1,6-bisphosphate + H2O = beta-D-fructose 6-phosphate + phosphate. Its pathway is carbohydrate biosynthesis; gluconeogenesis. The sequence is that of Fructose-1,6-bisphosphatase class 3 from Saccharophagus degradans (strain 2-40 / ATCC 43961 / DSM 17024).